The sequence spans 1149 residues: Eukaryotic translation initiation factor 3 subunit A (1149 aa).

The PCI domain maps to 317–498 (IQRMTSHVLI…HSVHFGTDLS (182 aa)). Disordered regions lie at residues 496–515 (DLSESQREDHPDGPTLQSMP) and 811–1149 (EEER…KHHR). Positions 811–885 (EEERRRIEEE…APRGEKEERG (75 aa)) are enriched in basic and acidic residues. A compositionally biased stretch (gly residues) spans 886–895 (GGGGGGGAWR). Residues 908–924 (AKPESDWRNAREAREPA) show a composition bias toward basic and acidic residues. A compositionally biased stretch (low complexity) spans 925–937 (PESAGASSAAAPA). Composition is skewed to basic and acidic residues over residues 961-970 (RPPRGDDREP), 1005-1095 (GPMR…DRRG), and 1113-1132 (EPAKPREERRGGEERPKEAR).

Belongs to the eIF-3 subunit A family. Component of the eukaryotic translation initiation factor 3 (eIF-3) complex.

The protein localises to the cytoplasm. In terms of biological role, RNA-binding component of the eukaryotic translation initiation factor 3 (eIF-3) complex, which is involved in protein synthesis of a specialized repertoire of mRNAs and, together with other initiation factors, stimulates binding of mRNA and methionyl-tRNAi to the 40S ribosome. The eIF-3 complex specifically targets and initiates translation of a subset of mRNAs involved in cell proliferation. The protein is Eukaryotic translation initiation factor 3 subunit A of Culex quinquefasciatus (Southern house mosquito).